Consider the following 258-residue polypeptide: Envelope glycoprotein L (258 aa).

Residues 1-31 (MYECMFFSHRLTIGFYIPLIVLTTMSSLSES) form the signal peptide. In terms of domain architecture, gL betaherpesvirus-type spans 36–243 (QKTACTVAAI…ILYQASLSGP (208 aa)). Cysteine 145 and cysteine 150 form a disulfide bridge.

The protein belongs to the herpesviridae glycoprotein L (gL) family. Betaherpesvirinae gL subfamily. In terms of assembly, interacts with glycoprotein H (gH); this interaction is necessary for the correct processing and cell surface expression of gH. Forms the envelope pentamer complex (PC) composed of gH, gL, UL128, UL130, and UL131A. The pentamer interacts with host NRP2. Forms the envelope trimer complex composed of gH, gL, and gO. The trimer interacts with host PDGFRA.

Its subcellular location is the virion membrane. The protein localises to the host cell membrane. It is found in the host Golgi apparatus. The protein resides in the host trans-Golgi network. Its function is as follows. The heterodimer glycoprotein H-glycoprotein L is required for the fusion of viral and plasma membranes leading to virus entry into the host cell. Acts as a functional inhibitor of gH and maintains gH in an inhibited form. Upon binding to host integrins, gL dissociates from gH leading to activation of the viral fusion glycoproteins gB and gH. In human cytomegalovirus, forms two distincts complexes to mediate viral entry, a trimer and a pentamer at the surface of the virion envelope. The gH-gL-gO trimer is required for infection in fibroblasts by interacting with host PDGFRA. The gH-gL-UL128-UL130-UL131A pentamer is essential for viral entry in epithelial, endothelial and myeloid cells via interaction with host NRP2. The sequence is that of Envelope glycoprotein L from Guinea pig cytomegalovirus (strain 22122) (GPCMV).